The following is a 227-amino-acid chain: Cytochrome c oxidase subunit 2 (227 aa).

The Mitochondrial intermembrane portion of the chain corresponds to 1–26; that stretch reads MATWSNFNLQNSASPLMEQIIFFHDH. Residues 27 to 51 form a helical membrane-spanning segment; sequence TLVILIMITILVGYLMISLFFNSYI. Over 52 to 62 the chain is Mitochondrial matrix; the sequence is NRFLLEGQMIE. The chain crosses the membrane as a helical span at residues 63 to 81; that stretch reads LIWTILPAITLIFIALPSL. At 82 to 227 the chain is on the mitochondrial intermembrane side; it reads RLLYLLDELN…NFINWINNYS (146 aa). Positions 161, 196, 198, 200, 204, and 207 each coordinate Cu cation. Position 198 (Glu198) interacts with Mg(2+).

This sequence belongs to the cytochrome c oxidase subunit 2 family. In terms of assembly, component of the cytochrome c oxidase (complex IV, CIV), a multisubunit enzyme composed of a catalytic core of 3 subunits and several supernumerary subunits. The complex exists as a monomer or a dimer and forms supercomplexes (SCs) in the inner mitochondrial membrane with ubiquinol-cytochrome c oxidoreductase (cytochrome b-c1 complex, complex III, CIII). Cu cation serves as cofactor.

The protein resides in the mitochondrion inner membrane. The catalysed reaction is 4 Fe(II)-[cytochrome c] + O2 + 8 H(+)(in) = 4 Fe(III)-[cytochrome c] + 2 H2O + 4 H(+)(out). Its function is as follows. Component of the cytochrome c oxidase, the last enzyme in the mitochondrial electron transport chain which drives oxidative phosphorylation. The respiratory chain contains 3 multisubunit complexes succinate dehydrogenase (complex II, CII), ubiquinol-cytochrome c oxidoreductase (cytochrome b-c1 complex, complex III, CIII) and cytochrome c oxidase (complex IV, CIV), that cooperate to transfer electrons derived from NADH and succinate to molecular oxygen, creating an electrochemical gradient over the inner membrane that drives transmembrane transport and the ATP synthase. Cytochrome c oxidase is the component of the respiratory chain that catalyzes the reduction of oxygen to water. Electrons originating from reduced cytochrome c in the intermembrane space (IMS) are transferred via the dinuclear copper A center (CU(A)) of subunit 2 and heme A of subunit 1 to the active site in subunit 1, a binuclear center (BNC) formed by heme A3 and copper B (CU(B)). The BNC reduces molecular oxygen to 2 water molecules using 4 electrons from cytochrome c in the IMS and 4 protons from the mitochondrial matrix. This chain is Cytochrome c oxidase subunit 2 (COII), found in Choristoneura rosaceana (Oblique banded leafroller).